A 221-amino-acid chain; its full sequence is Iron-sulfur cluster repair protein YtfE (221 aa).

This sequence belongs to the RIC family. YtfE subfamily. As to quaternary structure, homodimer.

It localises to the cytoplasm. Functionally, di-iron-containing protein involved in the repair of iron-sulfur clusters damaged by oxidative and nitrosative stress conditions. The chain is Iron-sulfur cluster repair protein YtfE from Yersinia pseudotuberculosis serotype O:1b (strain IP 31758).